The following is a 285-amino-acid chain: Prephenate dehydratase (285 aa).

In terms of domain architecture, Prephenate dehydratase spans 2-183 (KVGYLGPAAT…NHTRFVILSP (182 aa)). Residues 204-281 (MVMLPQDDQS…CKVRLLGAYQ (78 aa)) form the ACT domain.

It catalyses the reaction prephenate + H(+) = 3-phenylpyruvate + CO2 + H2O. The protein operates within amino-acid biosynthesis; L-phenylalanine biosynthesis; phenylpyruvate from prephenate: step 1/1. The sequence is that of Prephenate dehydratase (pheA) from Bacillus subtilis (strain 168).